The primary structure comprises 80 residues: Large ribosomal subunit protein bL31B (80 aa).

It belongs to the bacterial ribosomal protein bL31 family. Type B subfamily. Part of the 50S ribosomal subunit.

The chain is Large ribosomal subunit protein bL31B from Oenococcus oeni (strain ATCC BAA-331 / PSU-1).